A 226-amino-acid polypeptide reads, in one-letter code: ATP synthase F(0) complex subunit a (226 aa).

Helical transmembrane passes span 13 to 33, 69 to 89, 97 to 117, 138 to 158, 179 to 199, and 201 to 221; these read VILG…LISW, WALL…LGLL, TQLS…VIMA, IPVL…ALGV, FVLL…LFLL, and LLEI…LSLY.

It belongs to the ATPase A chain family. As to quaternary structure, component of the ATP synthase complex composed at least of ATP5F1A/subunit alpha, ATP5F1B/subunit beta, ATP5MC1/subunit c (homooctomer), MT-ATP6/subunit a, MT-ATP8/subunit 8, ATP5ME/subunit e, ATP5MF/subunit f, ATP5MG/subunit g, ATP5MK/subunit k, ATP5MJ/subunit j, ATP5F1C/subunit gamma, ATP5F1D/subunit delta, ATP5F1E/subunit epsilon, ATP5PF/subunit F6, ATP5PB/subunit b, ATP5PD/subunit d, ATP5PO/subunit OSCP. ATP synthase complex consists of a soluble F(1) head domain (subunits alpha(3) and beta(3)) - the catalytic core - and a membrane F(0) domain - the membrane proton channel (subunits c, a, 8, e, f, g, k and j). These two domains are linked by a central stalk (subunits gamma, delta, and epsilon) rotating inside the F1 region and a stationary peripheral stalk (subunits F6, b, d, and OSCP). Interacts with DNAJC30; interaction is direct.

It is found in the mitochondrion inner membrane. It carries out the reaction H(+)(in) = H(+)(out). In terms of biological role, subunit a, of the mitochondrial membrane ATP synthase complex (F(1)F(0) ATP synthase or Complex V) that produces ATP from ADP in the presence of a proton gradient across the membrane which is generated by electron transport complexes of the respiratory chain. ATP synthase complex consist of a soluble F(1) head domain - the catalytic core - and a membrane F(1) domain - the membrane proton channel. These two domains are linked by a central stalk rotating inside the F(1) region and a stationary peripheral stalk. During catalysis, ATP synthesis in the catalytic domain of F(1) is coupled via a rotary mechanism of the central stalk subunits to proton translocation. With the subunit c (ATP5MC1), forms the proton-conducting channel in the F(0) domain, that contains two crucial half-channels (inlet and outlet) that facilitate proton movement from the mitochondrial intermembrane space (IMS) into the matrix. Protons are taken up via the inlet half-channel and released through the outlet half-channel, following a Grotthuss mechanism. The chain is ATP synthase F(0) complex subunit a from Xenopus laevis (African clawed frog).